A 629-amino-acid chain; its full sequence is MNRYTTIKQLGDGTYGSVLLGRSIESGELIAIKKMKRKFYSWEECMNLREVKSLKKLNHANIVKLKEVIRENDHLYFIFEYMKENLYQLIKERNKLFPESAIRNIMYQILQGLAFIHKHGFFHRDLKPENLLCMGPELVKIADFGLAREIRSRPPYTDYVSTRWYRAPEVLLRSTNYSSPIDIWAVGCIMAEVYTLRPLFPGASEIDTIFKICQVLGTPKKTDWPEGYQLSSAMNFLWPQCIPNNLKTLIPNASSEAIQLLRDLLQWDPKKRPTASQALRYPYFQIGHPLGIISKDSGKPQREVQDKTGPPPYIKPAPPAQAPAKAYTLISSRPSQASQPPQHSVHPYKGDVSRTEQLSHVQEGKPSPPFFPSLHNKNLQPKILASLEQKNGEIKPKSRRRWGLISRSTKGSDDWADLDDLDFSPSLTRIDVKNKKRQSDDTLCRFESVLDLKPSESVGTGTTVSTQASSQRRDTPTLQSSAKQHYLKHSRYLPGINIRNGVLPNPGKDFLPSNSWSSSGLSGKSSGTVSVVSKITSVGSGSASSSGLTGSYIPSFLKKEIGSVMQRVQLAPLAAPPPGYSSLKAVRPHPGRPFFHTQPRSTPGLIPRPPAAQPVHGRIDWSSKYPSRR.

Positions 4–284 (YTTIKQLGDG…ASQALRYPYF (281 aa)) constitute a Protein kinase domain. Residues 10–18 (LGDGTYGSV) and Lys-33 each bind ATP. The Proton acceptor role is filled by Asp-125. Thr-157 is subject to Phosphothreonine; by CDK7. A Phosphotyrosine modification is found at Tyr-159. Ser-161 carries the phosphoserine modification. 3 disordered regions span residues 292–376 (IISK…SLHN), 455–483 (SESV…SSAK), and 581–629 (SSLK…PSRR). The span at 296–306 (DSGKPQREVQD) shows a compositional bias: basic and acidic residues. A compositionally biased stretch (pro residues) spans 309–321 (GPPPYIKPAPPAQ). 2 stretches are compositionally biased toward low complexity: residues 322–344 (APAK…PQHS) and 457–470 (SVGT…QASS).

Belongs to the protein kinase superfamily. CMGC Ser/Thr protein kinase family. CDC2/CDKX subfamily. It depends on Mg(2+) as a cofactor. Autophosphorylated on serine and threonine residues. Phosphorylation at Thr-157 by CDK7/Cak1p increases kinase activity. In terms of tissue distribution, highly expressed in colon and lung, lower levels present in heart, esophagus, stomach, small intestine and ovary. Localizes to the crypt region of large and small intestine.

It localises to the cytoplasm. Its subcellular location is the cytosol. The protein localises to the cell projection. The protein resides in the cilium. It is found in the nucleus. It localises to the cytoskeleton. Its subcellular location is the cilium basal body. It carries out the reaction L-seryl-[protein] + ATP = O-phospho-L-seryl-[protein] + ADP + H(+). The catalysed reaction is L-threonyl-[protein] + ATP = O-phospho-L-threonyl-[protein] + ADP + H(+). Has an essential role in ciliogenesis, particularly in neuronal and retinal progenitor cells. Phosphorylates KIF3A. Involved in the control of ciliary length. Regulates the ciliary localization of SHH pathway components as well as the localization of IFT components at ciliary tips. May play a role in cardiac development. Regulates intraflagellar transport (IFT) speed and negatively regulates cilium length in a cAMP and mTORC1 signaling -dependent manner and this regulation requires its kinase activity. The sequence is that of Serine/threonine-protein kinase ICK (Cilk1) from Mus musculus (Mouse).